A 471-amino-acid chain; its full sequence is Uronate isomerase (471 aa).

This sequence belongs to the metallo-dependent hydrolases superfamily. Uronate isomerase family.

It catalyses the reaction D-glucuronate = D-fructuronate. The catalysed reaction is aldehydo-D-galacturonate = keto-D-tagaturonate. It participates in carbohydrate metabolism; pentose and glucuronate interconversion. This chain is Uronate isomerase, found in Cellvibrio japonicus (strain Ueda107) (Pseudomonas fluorescens subsp. cellulosa).